The primary structure comprises 235 residues: Segregation and condensation protein A (235 aa).

Belongs to the ScpA family. As to quaternary structure, component of a cohesin-like complex composed of ScpA, ScpB and the Smc homodimer, in which ScpA and ScpB bind to the head domain of Smc. The presence of the three proteins is required for the association of the complex with DNA.

It localises to the cytoplasm. In terms of biological role, participates in chromosomal partition during cell division. May act via the formation of a condensin-like complex containing Smc and ScpB that pull DNA away from mid-cell into both cell halves. This chain is Segregation and condensation protein A, found in Streptococcus equi subsp. equi (strain 4047).